A 236-amino-acid chain; its full sequence is Uridylate kinase (236 aa).

Position 8 to 11 (8 to 11 (KLSG)) interacts with ATP. Residues 16-21 (GEQGYG) are involved in allosteric activation by GTP. The ATP site is built by G51 and R55. UMP is bound by residues D70 and 131-138 (TGNPYFST). Residues N159, Y165, and D168 each contribute to the ATP site.

This sequence belongs to the UMP kinase family. In terms of assembly, homohexamer.

It localises to the cytoplasm. It carries out the reaction UMP + ATP = UDP + ADP. It participates in pyrimidine metabolism; CTP biosynthesis via de novo pathway; UDP from UMP (UMPK route): step 1/1. With respect to regulation, allosterically activated by GTP. Inhibited by UTP. In terms of biological role, catalyzes the reversible phosphorylation of UMP to UDP. The sequence is that of Uridylate kinase from Shouchella clausii (strain KSM-K16) (Alkalihalobacillus clausii).